The chain runs to 493 residues: Xaa-Pro dipeptidase (493 aa).

An N-acetylalanine modification is found at A2. Residue S167 is modified to Phosphoserine. H255 is an a dipeptide binding site. 3 residues coordinate Mn(2+): D276, D287, and H370. Position 287 (D287) interacts with a dipeptide. A dipeptide is bound by residues H377 and R398. E412 and E452 together coordinate Mn(2+).

The protein belongs to the peptidase M24B family. Eukaryotic-type prolidase subfamily. In terms of assembly, homodimer. Requires Mn(2+) as cofactor.

It carries out the reaction Xaa-L-Pro dipeptide + H2O = an L-alpha-amino acid + L-proline. Functionally, dipeptidase that catalyzes the hydrolysis of dipeptides with a prolyl (Xaa-Pro) or hydroxyprolyl residue in the C-terminal position. The preferred dipeptide substrate is Gly-Pro, but other Xaa-Pro dipeptides, such as Ala-Pro, Met-Pro, Phe-Pro, Val-Pro and Leu-Pro, can be cleaved. Plays an important role in collagen metabolism because the high level of iminoacids in collagen. The chain is Xaa-Pro dipeptidase (PEPD) from Pongo abelii (Sumatran orangutan).